The primary structure comprises 300 residues: tRNA dimethylallyltransferase (300 aa).

11-18 (GPTAVGKS) contributes to the ATP binding site. 13 to 18 (TAVGKS) is a substrate binding site. The interval 35–38 (DSIQ) is interaction with substrate tRNA.

This sequence belongs to the IPP transferase family. As to quaternary structure, monomer. Mg(2+) is required as a cofactor.

It carries out the reaction adenosine(37) in tRNA + dimethylallyl diphosphate = N(6)-dimethylallyladenosine(37) in tRNA + diphosphate. Functionally, catalyzes the transfer of a dimethylallyl group onto the adenine at position 37 in tRNAs that read codons beginning with uridine, leading to the formation of N6-(dimethylallyl)adenosine (i(6)A). The sequence is that of tRNA dimethylallyltransferase from Borrelia recurrentis (strain A1).